Reading from the N-terminus, the 872-residue chain is DNA mismatch repair protein MutS (872 aa).

622–629 (GPNMAGKS) contributes to the ATP binding site.

This sequence belongs to the DNA mismatch repair MutS family.

In terms of biological role, this protein is involved in the repair of mismatches in DNA. It is possible that it carries out the mismatch recognition step. This protein has a weak ATPase activity. The protein is DNA mismatch repair protein MutS of Geotalea uraniireducens (strain Rf4) (Geobacter uraniireducens).